The following is an 847-amino-acid chain: Glucans biosynthesis glucosyltransferase H (847 aa).

Residues 1–138 (MNKTTEYIDA…KWRTVGTIRR (138 aa)) lie on the Cytoplasmic side of the membrane. A helical membrane pass occupies residues 139 to 156 (YILLILTLAQTVVATWYM). At 157–193 (KTILPYQGWALINPMDMVGQDVWVSFMQLLPYMLQTG) the chain is on the periplasmic side. A helical membrane pass occupies residues 194-216 (ILILFAVLFCWVSAGFWTALMGF). Topologically, residues 217–511 (LQLLIGRDKY…LVKGMHPVHR (295 aa)) are cytoplasmic. Residues 512 to 534 (AVFLTGVMSYLSAPLWFMFLALS) traverse the membrane as a helical segment. The Periplasmic segment spans residues 535–567 (TALQVVHALTEPQYFLQPRQLFPVWPQWRPELA). Residues 568–590 (IALFASTMVLLFLPKLLSILLIW) form a helical membrane-spanning segment. Over 591–602 (CKGTKEYGGFWR) the chain is Cytoplasmic. The helical transmembrane segment at 603 to 625 (VTLSLLLEVLFSVLLAPVRMLFH) threads the bilayer. The Periplasmic segment spans residues 626–679 (TVFVVSAFLGWEVVWNSPQRDDDSTSWGEAFKRHGSQLLLGLVWAVGMAWLDLR). Residues 680-702 (FLFWLAPIVFSLILSPFVSVISS) form a helical membrane-spanning segment. Over 703 to 847 (RATVGLRTKR…ALRKPDAASQ (145 aa)) the chain is Cytoplasmic.

This sequence belongs to the glycosyltransferase 2 family. OpgH subfamily.

The protein localises to the cell inner membrane. It functions in the pathway glycan metabolism; osmoregulated periplasmic glucan (OPG) biosynthesis. Functionally, involved in the biosynthesis of osmoregulated periplasmic glucans (OPGs). The protein is Glucans biosynthesis glucosyltransferase H of Escherichia coli O6:H1 (strain CFT073 / ATCC 700928 / UPEC).